The following is a 423-amino-acid chain: tRNA(Ile2) 2-agmatinylcytidine synthetase TiaS (423 aa).

Positions 273–347 (VIVYGRVVEE…GINIEKIKIL (75 aa)) form a DNA-binding region, OB.

Belongs to the TiaS family.

The protein resides in the cytoplasm. It catalyses the reaction cytidine(34) in tRNA(Ile2) + agmatine + ATP + H2O = 2-agmatinylcytidine(34) in tRNA(Ile2) + AMP + 2 phosphate + 2 H(+). ATP-dependent agmatine transferase that catalyzes the formation of 2-agmatinylcytidine (agm2C) at the wobble position (C34) of tRNA(Ile2), converting the codon specificity from AUG to AUA. The protein is tRNA(Ile2) 2-agmatinylcytidine synthetase TiaS of Methanocaldococcus jannaschii (strain ATCC 43067 / DSM 2661 / JAL-1 / JCM 10045 / NBRC 100440) (Methanococcus jannaschii).